Reading from the N-terminus, the 378-residue chain is Prolargin (378 aa).

The N-terminal stretch at 1–21 (MRASFFWLLPLLLILASVAQG) is a signal peptide. The disordered stretch occupies residues 22–62 (QPTRPKPGIRRKPKPRPTPRFPQAPEPAEPTDLPPPLPPGP). Basic residues predominate over residues 28–38 (PGIRRKPKPRP). Positions 39 to 62 (TPRFPQAPEPAEPTDLPPPLPPGP) are enriched in pro residues. LRR repeat units lie at residues 91-110 (RRVP…NNFI), 111-134 (TELP…NNRI), 135-158 (RKVD…KNQL), 159-179 (EEVP…QNLI), 180-203 (SRIP…HNRL), 204-229 (SDGV…HNIL), 230-250 (RKMP…SNKI), 251-274 (ETIP…YNKL), 275-299 (SDRG…HNKI), 300-319 (SNVP…NNSI), 320-358 (EKIN…GNFL), and 359-378 (KPPI…SVVI). N-linked (GlcNAc...) asparagine glycosylation occurs at Asn120. Asn285, Asn316, and Asn323 each carry an N-linked (GlcNAc...) asparagine glycan. A disulfide bridge links Cys328 with Cys369.

It belongs to the small leucine-rich proteoglycan (SLRP) family. SLRP class II subfamily. As to quaternary structure, binds the basement membrane heparan sulfate proteoglycan perlecan and triple helical collagens type I and type II. In terms of processing, glycosylated; contains heparan sulfate. As to expression, expressed in cartilage throughout both fetal development and postnatal life. It is also expressed in the developing embryo prior to skeletogenesis. In adult, highest expression in lung, lower levels in cardiac and skeletal muscle.

It localises to the secreted. Its subcellular location is the extracellular space. It is found in the extracellular matrix. Its function is as follows. May anchor basement membranes to the underlying connective tissue. This is Prolargin (Prelp) from Mus musculus (Mouse).